The chain runs to 424 residues: Imidazolonepropionase (424 aa).

Fe(3+) is bound by residues histidine 84 and histidine 86. Residues histidine 84 and histidine 86 each coordinate Zn(2+). Arginine 93, tyrosine 156, and histidine 189 together coordinate 4-imidazolone-5-propanoate. Position 156 (tyrosine 156) interacts with N-formimidoyl-L-glutamate. Histidine 254 contacts Fe(3+). Histidine 254 serves as a coordination point for Zn(2+). Glutamate 257 provides a ligand contact to 4-imidazolone-5-propanoate. Position 328 (aspartate 328) interacts with Fe(3+). Position 328 (aspartate 328) interacts with Zn(2+). Asparagine 330 and glycine 332 together coordinate N-formimidoyl-L-glutamate. Serine 333 lines the 4-imidazolone-5-propanoate pocket.

This sequence belongs to the metallo-dependent hydrolases superfamily. HutI family. It depends on Zn(2+) as a cofactor. Requires Fe(3+) as cofactor.

Its subcellular location is the cytoplasm. It carries out the reaction 4-imidazolone-5-propanoate + H2O = N-formimidoyl-L-glutamate. Its pathway is amino-acid degradation; L-histidine degradation into L-glutamate; N-formimidoyl-L-glutamate from L-histidine: step 3/3. Catalyzes the hydrolytic cleavage of the carbon-nitrogen bond in imidazolone-5-propanoate to yield N-formimidoyl-L-glutamate. It is the third step in the universal histidine degradation pathway. The polypeptide is Imidazolonepropionase (Geobacillus sp. (strain WCH70)).